Reading from the N-terminus, the 397-residue chain is Argininosuccinate synthase (397 aa).

An ATP-binding site is contributed by 8 to 16 (AYSGGLDTS). Tyr-87 serves as a coordination point for L-citrulline. An ATP-binding site is contributed by Gly-117. L-aspartate contacts are provided by Thr-119, Asn-123, and Asp-124. Asn-123 contributes to the L-citrulline binding site. Residues Arg-127, Ser-175, Glu-259, and Tyr-271 each contribute to the L-citrulline site.

Belongs to the argininosuccinate synthase family. Type 1 subfamily. In terms of assembly, homotetramer.

It localises to the cytoplasm. It carries out the reaction L-citrulline + L-aspartate + ATP = 2-(N(omega)-L-arginino)succinate + AMP + diphosphate + H(+). It functions in the pathway amino-acid biosynthesis; L-arginine biosynthesis; L-arginine from L-ornithine and carbamoyl phosphate: step 2/3. The polypeptide is Argininosuccinate synthase (Streptomyces clavuligerus).